Here is a 660-residue protein sequence, read N- to C-terminus: Zeaxanthin epoxidase, chloroplastic (660 aa).

Residues 1–49 constitute a chloroplast transit peptide; sequence MYASSARDGIPGKWCNARRKQLPLLISKDFPAELYHSLPCKSLENGHIK. FAD contacts are provided by residues 79–107 and 357–370; these read KVLVAGGGIGGLVFALAGKKRGFDVLVFE and TFSWGKGRVTLLGD. Positions 545–609 constitute an FHA domain; sequence LVLSRDENMP…HGTWFIDNEG (65 aa).

The cofactor is FAD.

The protein localises to the plastid. Its subcellular location is the chloroplast membrane. The protein resides in the chloroplast thylakoid membrane. The catalysed reaction is all-trans-zeaxanthin + 4 reduced [2Fe-2S]-[ferredoxin] + 2 O2 + 4 H(+) = all-trans-violaxanthin + 4 oxidized [2Fe-2S]-[ferredoxin] + 2 H2O. It carries out the reaction all-trans-zeaxanthin + 2 reduced [2Fe-2S]-[ferredoxin] + O2 + 2 H(+) = all-trans-antheraxanthin + 2 oxidized [2Fe-2S]-[ferredoxin] + H2O. It catalyses the reaction all-trans-antheraxanthin + 2 reduced [2Fe-2S]-[ferredoxin] + O2 + 2 H(+) = all-trans-violaxanthin + 2 oxidized [2Fe-2S]-[ferredoxin] + H2O. The enzyme catalyses beta-cryptoxanthin + 2 reduced [2Fe-2S]-[ferredoxin] + O2 + 2 H(+) = (5R,6S)-5,6-epoxi-beta-cryptoxanthin + 2 oxidized [2Fe-2S]-[ferredoxin] + H2O. It functions in the pathway plant hormone biosynthesis; abscisate biosynthesis. Converts zeaxanthin into antheraxanthin and subsequently violaxanthin. Also acts on beta-cryptoxanthin. Involved in the epoxidation of zeaxanthin. The sequence is that of Zeaxanthin epoxidase, chloroplastic from Capsicum annuum (Capsicum pepper).